A 268-amino-acid chain; its full sequence is Indole-3-glycerol phosphate synthase (268 aa).

It belongs to the TrpC family.

It carries out the reaction 1-(2-carboxyphenylamino)-1-deoxy-D-ribulose 5-phosphate + H(+) = (1S,2R)-1-C-(indol-3-yl)glycerol 3-phosphate + CO2 + H2O. It functions in the pathway amino-acid biosynthesis; L-tryptophan biosynthesis; L-tryptophan from chorismate: step 4/5. This Acinetobacter baumannii (strain AB0057) protein is Indole-3-glycerol phosphate synthase.